The sequence spans 747 residues: MEERCESTESPQGQGRKNTKCGWLRKQGGFVKTWHTRWFVLKGDQLYYFKDEDETKPLGTIFLHGNKVIEHPCNEENPGKFLFDVVPGGERDRMTANHESYLLMASTQNDMEDWVKSIRRVIWGPFGGGIFGQKLEDTVRYEKRYGNRLAPMLVEQCVDFIRQRGLKEEGLFRLPGQANLVKELQDAFDCGEKPSFDSNTDVHTVASLLKLYLRELPEPVVPYAKYEDFLSCATLLSKEEEAGVKELMKQVKSLPVVNYNLLKYICRFLDEVQSYSGVNKMSAQNLATVFGPNILRPKVEDPLTIMEGTVVVQQLMSVMISKHDRLFPKDTEPQSKPQDGPNSNNNDGHKKATMGQLQNKENNNTKESPVRRCSWDKPESPQRSSVDNGSPTALSGSKTNSPRNSIHKLDISRSPPLMVKKNPAFNKGSGIVTNGSFSSSNAEGVEKPQTTPNGSLQARRTSSLKSSGTKMGTHSVQNGTVRMGILNTDTLGNSLNGRSMSWLPNGYVTLRDNKQKEPAGESGQHNRLSTYDNVHQQFSSMSLDDKHSVDSATWSTSSCEISLPENSNSCRSSTTTCPEQDFYVGNFEDPVLDGPPQDDLSHPGDYENKSDRRSVGGRSSRATSSSDNSETFVGNTSSNHSALHSLVSSLKQEMTKQKIEYESRIKSLEQRNLTLETEMLSLHDELDQERKKFTMIEIKMRNAERAKEDAEKRNDMLQKEMEQFFSTFGDLTVEPRRSERGNTIWIQ.

2 disordered regions span residues 1-20 and 327-475; these read MEER…KNTK and FPKD…GTHS. The PH domain occupies 17-123; that stretch reads KNTKCGWLRK…WVKSIRRVIW (107 aa). A Rho-GAP domain is found at 133–327; sequence QKLEDTVRYE…VMISKHDRLF (195 aa). Composition is skewed to polar residues over residues 334–346 and 355–367; these read QSKP…SNNN and GQLQ…NTKE. Phosphoserine occurs at positions 368, 390, 395, 397, 401, 412, 414, and 436. Positions 368 to 380 are enriched in basic and acidic residues; that stretch reads SPVRRCSWDKPES. A compositionally biased stretch (polar residues) spans 381 to 404; the sequence is PQRSSVDNGSPTALSGSKTNSPRN. Positions 431 to 475 are enriched in polar residues; sequence IVTNGSFSSSNAEGVEKPQTTPNGSLQARRTSSLKSSGTKMGTHS. T451 is modified (phosphothreonine). S494 bears the Phosphoserine mark. The disordered stretch occupies residues 581–639; that stretch reads DFYVGNFEDPVLDGPPQDDLSHPGDYENKSDRRSVGGRSSRATSSSDNSETFVGNTSSN. Basic and acidic residues predominate over residues 599-614; that stretch reads DLSHPGDYENKSDRRS. The span at 616–629 shows a compositional bias: low complexity; sequence GGRSSRATSSSDNS. A compositionally biased stretch (polar residues) spans 630–639; the sequence is ETFVGNTSSN. Residues 648–728 are a coiled coil; that stretch reads SSLKQEMTKQ…KEMEQFFSTF (81 aa).

As to quaternary structure, interacts with FLNA. In terms of processing, phosphorylated by ROCK, leading to activate the RacGAP activity.

Its subcellular location is the cytoplasm. It is found in the cytoskeleton. The protein localises to the cell junction. It localises to the adherens junction. The protein resides in the focal adhesion. Its subcellular location is the cell projection. Functionally, rho GTPase-activating protein involved in cell polarity, cell morphology and cytoskeletal organization. Acts as a GTPase activator for the Rac-type GTPase by converting it to an inactive GDP-bound state. Controls actin remodeling by inactivating Rac downstream of Rho leading to suppress leading edge protrusion and promotes cell retraction to achieve cellular polarity. Able to suppress RAC1 and CDC42 activity in vitro. Overexpression induces cell rounding with partial or complete disruption of actin stress fibers and formation of membrane ruffles, lamellipodia, and filopodia. Isoform 2 is a vascular cell-specific GAP involved in modulation of angiogenesis. This chain is Rho GTPase-activating protein 24 (Arhgap24), found in Mus musculus (Mouse).